The chain runs to 284 residues: ATP synthase subunit beta, chloroplastic (284 aa).

It belongs to the ATPase alpha/beta chains family. As to quaternary structure, F-type ATPases have 2 components, CF(1) - the catalytic core - and CF(0) - the membrane proton channel. CF(1) has five subunits: alpha(3), beta(3), gamma(1), delta(1), epsilon(1). CF(0) has four main subunits: a(1), b(1), b'(1) and c(9-12).

It localises to the plastid. The protein localises to the chloroplast thylakoid membrane. The catalysed reaction is ATP + H2O + 4 H(+)(in) = ADP + phosphate + 5 H(+)(out). Functionally, produces ATP from ADP in the presence of a proton gradient across the membrane. The catalytic sites are hosted primarily by the beta subunits. This is ATP synthase subunit beta, chloroplastic (atpB) from Asplenium nidus (Bird's nest fern).